The primary structure comprises 460 residues: Pentatricopeptide repeat-containing protein At5g43790 (460 aa).

PPR repeat units lie at residues 70–107, 111–142, 149–179, 180–214, 215–249, 250–280, 281–315, 316–351, and 352–382; these read SVFLYNTLISSIVSNHNSTQTHLAFSLYDQILSSRSNF, NEFTYPSLFKASGFDAQWHRHGRALHAHVLKF, DRFVQAALVGFYANCGKLREARSLFERIREP, DLATWNTLLAAYANSEEIDSDEEVLLLFMRMQVRP, NELSLVALIKSCANLGEFVRGVWAHVYVLKNNLTL, NQFVGTSLIDLYSKCGCLSFARKVFDEMSQR, DVSCYNAMIRGLAVHGFGQEGIELYKSLISQGLVP, DSATFVVTISACSHSGLVDEGLQIFNSMKAVYGIEP, and KVEHYGCLVDLLGRSGRLEEAEECIKKMPVK. The type E motif; degenerate stretch occupies residues 387–460; sequence LWRSFLGSSQ…NKSPGISTLN (74 aa).

This sequence belongs to the PPR family. PCMP-E subfamily.

This Arabidopsis thaliana (Mouse-ear cress) protein is Pentatricopeptide repeat-containing protein At5g43790 (PCMP-E30).